A 188-amino-acid chain; its full sequence is UPF0461 protein C5orf24 (188 aa).

Residues 1 to 10 show a composition bias toward polar residues; that stretch reads MMHPVASSNP. The segment at 1 to 20 is disordered; the sequence is MMHPVASSNPAFCGPGKPSC. Ser-37 carries the post-translational modification Phosphoserine. A Glycyl lysine isopeptide (Lys-Gly) (interchain with G-Cter in SUMO2) cross-link involves residue Lys-75. The segment at 79-142 is disordered; that stretch reads KKKKNLNRSG…GYKVSPGRPP (64 aa). Basic residues predominate over residues 80–92; sequence KKKNLNRSGKRGR. Polar residues predominate over residues 94–107; sequence SGTTKSAGYRTSTG. A phosphoserine mark is found at Ser-121 and Ser-180. Lys-184 is covalently cross-linked (Glycyl lysine isopeptide (Lys-Gly) (interchain with G-Cter in SUMO2)).

It belongs to the UPF0461 family.

This chain is UPF0461 protein C5orf24 (C5orf24), found in Homo sapiens (Human).